The sequence spans 850 residues: Bifunctional levopimaradiene synthase, chloroplastic (850 aa).

Residues 1–52 (MALPSSSLSSQIHTGATTQCIPHFHGSLNAGTSAGKRRSLYLRWGKGPSKIV) constitute a chloroplast transit peptide. Lys250 provides a ligand contact to substrate. Mg(2+) is bound by residues Asp383 and Asp385. Residues 383–386 (DIDD) carry the DXDD motif motif. Lys470 is a binding site for substrate. 5 residues coordinate Mg(2+): Asp602, Asp606, Asn746, Thr750, and Glu754. The DDXXD motif motif lies at 602 to 606 (DDLYD).

The protein belongs to the terpene synthase family. Tpsd subfamily. It depends on Mg(2+) as a cofactor.

The protein localises to the plastid. Its subcellular location is the chloroplast. It catalyses the reaction (2E,6E,10E)-geranylgeranyl diphosphate = (+)-copalyl diphosphate. The catalysed reaction is (+)-copalyl diphosphate = abieta-7,13-diene + diphosphate. It carries out the reaction (+)-copalyl diphosphate = abieta-8(14),12-diene + diphosphate. The enzyme catalyses (+)-copalyl diphosphate = neoabietadiene + diphosphate. Its pathway is terpene metabolism; oleoresin biosynthesis. Its function is as follows. Involved in defensive oleoresin formation in conifers in response to insect attack or other injury. Involved in diterpene (C20) olefins biosynthesis. Bifunctional enzyme that catalyzes two sequential cyclizations of geranylgeranyl diphosphate (GGPP) to levopimaradiene. Levopimaradiene is the major products of the enzyme with abietadiene and neoabietadiene. No activity with farnesyl diphosphate (FPP) as substrate. This chain is Bifunctional levopimaradiene synthase, chloroplastic, found in Pinus contorta (Shore pine).